Consider the following 963-residue polypeptide: Putative RNA Helicase B962L (963 aa).

Residues 43-229 form the Helicase ATP-binding domain; it reads IPTSLADRVL…FGIGKENIIL (187 aa). 56–63 contributes to the ATP binding site; the sequence is SRTGSGKS. A DEAH box motif is present at residues 167–170; sequence DEAH. The region spanning 253-459 is the Helicase C-terminal domain; the sequence is ACETALTIHK…TIKKNKEGVF (207 aa). A helical transmembrane segment spans residues 521–541; it reads GYFWQAAISDIATILAVVSVV.

This sequence belongs to the DEAD box helicase family. DEAH subfamily.

Its subcellular location is the host membrane. It localises to the virion. The enzyme catalyses ATP + H2O = ADP + phosphate + H(+). This is Putative RNA Helicase B962L from Ornithodoros (relapsing fever ticks).